A 172-amino-acid chain; its full sequence is Large ribosomal subunit protein uL16 (172 aa).

Belongs to the universal ribosomal protein uL16 family.

The protein is Large ribosomal subunit protein uL16 of Methanocella arvoryzae (strain DSM 22066 / NBRC 105507 / MRE50).